Consider the following 291-residue polypeptide: tRNA U34 carboxymethyltransferase (291 aa).

Residues lysine 61, tryptophan 75, lysine 80, glycine 100, 122–124 (DPS), 149–150 (VE), tyrosine 169, and arginine 284 contribute to the carboxy-S-adenosyl-L-methionine site.

The protein belongs to the class I-like SAM-binding methyltransferase superfamily. CmoB family. As to quaternary structure, homotetramer.

It catalyses the reaction carboxy-S-adenosyl-L-methionine + 5-hydroxyuridine(34) in tRNA = 5-carboxymethoxyuridine(34) in tRNA + S-adenosyl-L-homocysteine + H(+). In terms of biological role, catalyzes carboxymethyl transfer from carboxy-S-adenosyl-L-methionine (Cx-SAM) to 5-hydroxyuridine (ho5U) to form 5-carboxymethoxyuridine (cmo5U) at position 34 in tRNAs. This chain is tRNA U34 carboxymethyltransferase, found in Campylobacter jejuni subsp. jejuni serotype O:23/36 (strain 81-176).